The following is a 223-amino-acid chain: Glutathione S-transferase A1 (223 aa).

Met-1 bears the N-acetylmethionine mark. Ala-2 is subject to N-acetylalanine; in Glutathione S-transferase A1, N-terminally processed. The 81-residue stretch at 3–83 (GKPVLHYFNA…YIATKYDLYG (81 aa)) folds into the GST N-terminal domain. Lys-4 is subject to N6-succinyllysine. Glutathione-binding positions include Tyr-9, Lys-45, 54–55 (QV), and 67–68 (QT). The region spanning 85–208 (DMKERALIDM…QPGSQRKPPM (124 aa)) is the GST C-terminal domain.

This sequence belongs to the GST superfamily. Alpha family. In terms of assembly, homodimer. In terms of tissue distribution, expressed in the liver, skin and kidney.

It catalyses the reaction RX + glutathione = an S-substituted glutathione + a halide anion + H(+). The enzyme catalyses prostaglandin A2 + glutathione = prostaglandin A2-S-(R)-glutathione. It carries out the reaction prostaglandin J2 + glutathione = prostaglandin J2-S-(R)-glutathione. The catalysed reaction is (13S)-hydroperoxy-(9Z,11E)-octadecadienoate + 2 glutathione = (13S)-hydroxy-(9Z,11E)-octadecadienoate + glutathione disulfide + H2O. It catalyses the reaction androst-5-ene-3,17-dione = androst-4-ene-3,17-dione. Its function is as follows. Glutathione S-transferase that catalyzes the nucleophilic attack of the sulfur atom of glutathione on the electrophilic groups of a wide range of exogenous and endogenous compounds. Involved in the formation of glutathione conjugates of both prostaglandin A2 (PGA2) and prostaglandin J2 (PGJ2). It also catalyzes the isomerization of D5-androstene-3,17-dione (AD) into D4-androstene-3,17-dione and may therefore play an important role in hormone biosynthesis. Through its glutathione-dependent peroxidase activity toward the fatty acid hydroperoxide (13S)-hydroperoxy-(9Z,11E)-octadecadienoate/13-HPODE it is also involved in the metabolism of oxidized linoleic acid. This chain is Glutathione S-transferase A1 (Gsta1), found in Mus musculus (Mouse).